Here is a 195-residue protein sequence, read N- to C-terminus: Imidazoleglycerol-phosphate dehydratase (195 aa).

It belongs to the imidazoleglycerol-phosphate dehydratase family.

It is found in the cytoplasm. It catalyses the reaction D-erythro-1-(imidazol-4-yl)glycerol 3-phosphate = 3-(imidazol-4-yl)-2-oxopropyl phosphate + H2O. Its pathway is amino-acid biosynthesis; L-histidine biosynthesis; L-histidine from 5-phospho-alpha-D-ribose 1-diphosphate: step 6/9. The sequence is that of Imidazoleglycerol-phosphate dehydratase from Ruegeria sp. (strain TM1040) (Silicibacter sp.).